A 476-amino-acid polypeptide reads, in one-letter code: Doublesex and mab-3 related transcription factor 3 (476 aa).

The segment at residues Cys29–Arg76 is a DNA-binding region (DM). Disordered stretches follow at residues Asp89–Thr130 and Gly147–Cys195. Residues Asp102 to Gln121 show a composition bias toward low complexity. Over residues Phe176–Ser185 the composition is skewed to basic and acidic residues. The DMA domain occupies Arg255 to Val290. Positions Asn418–Arg432 are enriched in polar residues. The disordered stretch occupies residues Asn418 to Ser476.

The protein belongs to the DMRT family.

Its subcellular location is the nucleus. Its function is as follows. Probable transcription factor that plays a role in configuring the spinal circuits controlling stride in vertebrates. Involved in neuronal specification within a specific subdivision of spinal cord neurons and in the development of a coordinated locomotor network controlling limb movements. May regulate transcription during sexual development. The polypeptide is Doublesex and mab-3 related transcription factor 3 (Dmrt3) (Rattus norvegicus (Rat)).